Reading from the N-terminus, the 472-residue chain is Ribosomal RNA small subunit methyltransferase F (472 aa).

Residues 123-129 (AAAPGSK), Glu147, Asp174, and Asp192 each bind S-adenosyl-L-methionine. Catalysis depends on Cys245, which acts as the Nucleophile.

This sequence belongs to the class I-like SAM-binding methyltransferase superfamily. RsmB/NOP family.

The protein resides in the cytoplasm. It carries out the reaction cytidine(1407) in 16S rRNA + S-adenosyl-L-methionine = 5-methylcytidine(1407) in 16S rRNA + S-adenosyl-L-homocysteine + H(+). Specifically methylates the cytosine at position 1407 (m5C1407) of 16S rRNA. This chain is Ribosomal RNA small subunit methyltransferase F, found in Vibrio vulnificus (strain CMCP6).